Reading from the N-terminus, the 914-residue chain is Beta-mannosidase A (914 aa).

The N-terminal stretch at 1–20 is a signal peptide; it reads MRFTATAAALVASSIPATLG. N-linked (GlcNAc...) asparagine glycans are attached at residues Asn39, Asn79, Asn230, Asn265, Asn299, Asn309, and Asn330. Glu462 (proton donor) is an active-site residue. N-linked (GlcNAc...) asparagine glycans are attached at residues Asn591, Asn614, Asn641, Asn721, Asn744, Asn773, Asn784, and Asn909.

The protein belongs to the glycosyl hydrolase 2 family. Beta-mannosidase A subfamily. Homodimer.

It is found in the secreted. It carries out the reaction Hydrolysis of terminal, non-reducing beta-D-mannose residues in beta-D-mannosides.. Its pathway is glycan metabolism; N-glycan degradation. Functionally, exoglycosidase that cleaves the single beta-linked mannose residue from the non-reducing end of beta-mannosidic oligosaccharides of various complexity and length. Involved in the degradation of polymeric mannan and galactomannan. This is Beta-mannosidase A (mndA) from Aspergillus oryzae (strain ATCC 42149 / RIB 40) (Yellow koji mold).